A 141-amino-acid chain; its full sequence is Large ribosomal subunit protein uL11 (141 aa).

It belongs to the universal ribosomal protein uL11 family. As to quaternary structure, part of the ribosomal stalk of the 50S ribosomal subunit. Interacts with L10 and the large rRNA to form the base of the stalk. L10 forms an elongated spine to which L12 dimers bind in a sequential fashion forming a multimeric L10(L12)X complex. One or more lysine residues are methylated.

Functionally, forms part of the ribosomal stalk which helps the ribosome interact with GTP-bound translation factors. The protein is Large ribosomal subunit protein uL11 of Helicobacter hepaticus (strain ATCC 51449 / 3B1).